A 342-amino-acid polypeptide reads, in one-letter code: MTQLTITRPDDWHVHLRDGEVLKDTVRDISRYNGRALIMPNTIPPVTDTEMALAYRERIMAEQPSEQFQPLMALYLTDNTTPDEIRKAKESGAVVAAKLYPAGATTNSDSGVTSAQKIYHVLEAMQEVGMLLLVHGEVTAHDVDIFDREKEFLDTVLAPIVNDFPNLKIVLEHITTADAATFVKNANENVAATITAHHLLYNRNHMLVGGIKPHFYCLPILKRNTHQLALIEAATSGSKKFFLGTDSAPHAKGAKESACGCAGSYTAHAAVELYAEVFDLEGKIENLEAFASHNGPDFYGMPRNADTITLVKEEWNVAETMPFGSDIVVPIRGGETIAWAVK.

2 residues coordinate Zn(2+): His13 and His15. Residues 15-17 (HLR) and Asn41 contribute to the substrate site. Residues Lys98, His135, and His173 each contribute to the Zn(2+) site. Position 98 is an N6-carboxylysine (Lys98). Position 135 (His135) interacts with substrate. Leu218 contacts substrate. Residue Asp246 coordinates Zn(2+). Asp246 is a catalytic residue. Positions 250 and 262 each coordinate substrate.

This sequence belongs to the metallo-dependent hydrolases superfamily. DHOase family. Class II DHOase subfamily. Homodimer. Zn(2+) is required as a cofactor.

The enzyme catalyses (S)-dihydroorotate + H2O = N-carbamoyl-L-aspartate + H(+). It functions in the pathway pyrimidine metabolism; UMP biosynthesis via de novo pathway; (S)-dihydroorotate from bicarbonate: step 3/3. Its function is as follows. Catalyzes the reversible cyclization of carbamoyl aspartate to dihydroorotate. This Vibrio atlanticus (strain LGP32) (Vibrio splendidus (strain Mel32)) protein is Dihydroorotase.